Consider the following 428-residue polypeptide: Sulfite exporter TauE/SafE family protein 6 (428 aa).

11 helical membrane-spanning segments follow: residues Met-1–Gln-21, Ala-61–Ile-81, Gly-82–Ala-102, Phe-105–Cys-125, Leu-128–Gly-148, Val-149–Met-169, Tyr-245–Ser-265, Val-294–Ile-314, Thr-332–Met-352, Glu-356–Ala-376, and Ile-388–Gly-408.

This sequence belongs to the 4-toluene sulfonate uptake permease (TSUP) (TC 2.A.102) family.

The protein localises to the membrane. The chain is Sulfite exporter TauE/SafE family protein 6 from Arabidopsis thaliana (Mouse-ear cress).